The following is a 449-amino-acid chain: Ribosomal protein uS12 methylthiotransferase RimO (449 aa).

Positions 15–125 (PRISFVSLGC…VLAAVHEAVP (111 aa)) constitute an MTTase N-terminal domain. [4Fe-4S] cluster contacts are provided by Cys-24, Cys-60, Cys-89, Cys-156, Cys-160, and Cys-163. Positions 142-379 (LTPRHYAYLK…MRTQQKVSAR (238 aa)) constitute a Radical SAM core domain. Residues 382–448 (KRKVGTRQSV…PYDLSGTAVG (67 aa)) enclose the TRAM domain.

This sequence belongs to the methylthiotransferase family. RimO subfamily. [4Fe-4S] cluster is required as a cofactor.

It is found in the cytoplasm. It catalyses the reaction L-aspartate(89)-[ribosomal protein uS12]-hydrogen + (sulfur carrier)-SH + AH2 + 2 S-adenosyl-L-methionine = 3-methylsulfanyl-L-aspartate(89)-[ribosomal protein uS12]-hydrogen + (sulfur carrier)-H + 5'-deoxyadenosine + L-methionine + A + S-adenosyl-L-homocysteine + 2 H(+). Functionally, catalyzes the methylthiolation of an aspartic acid residue of ribosomal protein uS12. In Xanthobacter autotrophicus (strain ATCC BAA-1158 / Py2), this protein is Ribosomal protein uS12 methylthiotransferase RimO.